The following is a 40-amino-acid chain: Large ribosomal subunit protein bL36 (40 aa).

The protein belongs to the bacterial ribosomal protein bL36 family.

The polypeptide is Large ribosomal subunit protein bL36 (Corynebacterium jeikeium (strain K411)).